The primary structure comprises 309 residues: MILTVTMNPSIDISYPLDELKIDTVNRVVDVTKTAGGKGLNVTRVLSEFGDSVLATGLVGGNLGEFLVEHIDNQVKKDFFSIQGETRNCIAILHGDNQTEVLEKGPEVLEQEGQDFLEHFKKLLESVEVVAISGSLPAGLPVDYYASLVELANQAGKPVVLDCSGAALQAVLESPHKPTVIKPNNEELSQLLGREVSEDLDELKEVLQEPLFAGIEWIIVSLGANGTFAKHGDTFYKVDIPRIQVVNPVGSGDSTVAGISSGLLHKESDAELLIKANVLGMLNAQEKMTGHVNMANYQVLYDQLIVKEV.

This sequence belongs to the carbohydrate kinase PfkB family. LacC subfamily.

The enzyme catalyses D-tagatofuranose 6-phosphate + ATP = D-tagatofuranose 1,6-bisphosphate + ADP + H(+). It functions in the pathway carbohydrate metabolism; D-tagatose 6-phosphate degradation; D-glyceraldehyde 3-phosphate and glycerone phosphate from D-tagatose 6-phosphate: step 1/2. The polypeptide is Tagatose-6-phosphate kinase (Streptococcus pneumoniae (strain Taiwan19F-14)).